Reading from the N-terminus, the 329-residue chain is Vomeronasal type-1 receptor 43 (329 aa).

The Extracellular portion of the chain corresponds to 1 to 32 (MSKILFFSPCSLFSHTMNKNSRLHTNSNIGNT). Residues 33–53 (FFSEIGIGITGNSFLLLYHIL) traverse the membrane as a helical segment. Residues 54 to 65 (KFIRGHRPRLTD) lie on the Cytoplasmic side of the membrane. Residues 66 to 86 (LPIGLLSLIHLLMLLVAAFIA) traverse the membrane as a helical segment. Topologically, residues 87–109 (TDIFISRRGWDDIICKFLVYLYR) are extracellular. Cys-101 and Cys-188 form a disulfide bridge. Residues 110-130 (VLRGLSLCTTSMLSVLQAIIL) form a helical membrane-spanning segment. Residues 131 to 147 (SPRSSCLSKFKHISLHH) lie on the Cytoplasmic side of the membrane. Residues 148 to 168 (ILCAILFLSVLYMLISSQLLV) form a helical membrane-spanning segment. Residues 169–209 (SIIATPNLTTNDLTYVTQSCSILPLSYLVESINSTLLAIRE) are Extracellular-facing. Asn-175 and Asn-201 each carry an N-linked (GlcNAc...) asparagine glycan. The chain crosses the membrane as a helical span at residues 210–230 (YFLISLMFLSTWYIVALLCMH). At 231 to 255 (RKQTQHLQETRLSLKKSPEQSATQT) the chain is on the cytoplasmic side. A helical membrane pass occupies residues 256–276 (ILMLMTFFVLMTIYDNIVSCL). Residues 277-285 (RTMLLNDPT) lie on the Extracellular side of the membrane. A helical transmembrane segment spans residues 286 to 306 (SYSIELFMIHIYATVSPFVFM). Residues 307–329 (SNEKHIVNFLRSMGKRMINLNLH) lie on the Cytoplasmic side of the membrane.

It belongs to the G-protein coupled receptor 1 family.

It localises to the cell membrane. Putative pheromone receptor implicated in the regulation of social and reproductive behavior. The polypeptide is Vomeronasal type-1 receptor 43 (Vmn1r43) (Mus musculus (Mouse)).